The sequence spans 234 residues: tRNA (guanine-N(1)-)-methyltransferase (234 aa).

Residues glycine 112 and 132–137 (IGDFIL) contribute to the S-adenosyl-L-methionine site.

This sequence belongs to the RNA methyltransferase TrmD family. In terms of assembly, homodimer.

Its subcellular location is the cytoplasm. It carries out the reaction guanosine(37) in tRNA + S-adenosyl-L-methionine = N(1)-methylguanosine(37) in tRNA + S-adenosyl-L-homocysteine + H(+). Specifically methylates guanosine-37 in various tRNAs. The sequence is that of tRNA (guanine-N(1)-)-methyltransferase from Campylobacter jejuni (strain RM1221).